We begin with the raw amino-acid sequence, 194 residues long: Molybdenum cofactor guanylyltransferase (194 aa).

GTP is bound by residues 12–14, lysine 25, asparagine 53, aspartate 70, and aspartate 100; that span reads LAG. Aspartate 100 is a Mg(2+) binding site.

Belongs to the MobA family. In terms of assembly, monomer. Requires Mg(2+) as cofactor.

Its subcellular location is the cytoplasm. It catalyses the reaction Mo-molybdopterin + GTP + H(+) = Mo-molybdopterin guanine dinucleotide + diphosphate. Transfers a GMP moiety from GTP to Mo-molybdopterin (Mo-MPT) cofactor (Moco or molybdenum cofactor) to form Mo-molybdopterin guanine dinucleotide (Mo-MGD) cofactor. This is Molybdenum cofactor guanylyltransferase from Aliivibrio salmonicida (strain LFI1238) (Vibrio salmonicida (strain LFI1238)).